We begin with the raw amino-acid sequence, 161 residues long: Cytochrome c-type biogenesis protein CcmE (161 aa).

Residues 1 to 8 (MNPRRKKR) are Cytoplasmic-facing. The helical; Signal-anchor for type II membrane protein transmembrane segment at 9-29 (LTLAIALIGGVAAIASLLLYA) threads the bilayer. The Periplasmic portion of the chain corresponds to 30–161 (LNSNLNLFYT…DYSQQKSAAQ (132 aa)). Positions 131 and 135 each coordinate heme. Residues 138 to 161 (PEVAEAMGQKHEKLDYSQQKSAAQ) are disordered.

Belongs to the CcmE/CycJ family.

The protein resides in the cell inner membrane. Functionally, heme chaperone required for the biogenesis of c-type cytochromes. Transiently binds heme delivered by CcmC and transfers the heme to apo-cytochromes in a process facilitated by CcmF and CcmH. The chain is Cytochrome c-type biogenesis protein CcmE from Shewanella sp. (strain MR-4).